Consider the following 186-residue polypeptide: GTP-dependent dephospho-CoA kinase (186 aa).

GTP-binding residues include Asp43, Ile44, Val45, Asp62, Glu120, and Asp143.

The protein belongs to the GTP-dependent DPCK family.

It carries out the reaction 3'-dephospho-CoA + GTP = GDP + CoA + H(+). Its pathway is cofactor biosynthesis; coenzyme A biosynthesis. In terms of biological role, catalyzes the GTP-dependent phosphorylation of the 3'-hydroxyl group of dephosphocoenzyme A to form coenzyme A (CoA). This Haloquadratum walsbyi (strain DSM 16790 / HBSQ001) protein is GTP-dependent dephospho-CoA kinase.